The following is a 328-amino-acid chain: DNA-directed RNA polymerase subunit alpha (328 aa).

The tract at residues 1–231 (MIYQMQMPAK…EHVTFFADFS (231 aa)) is alpha N-terminal domain (alpha-NTD). The tract at residues 252-328 (MRKLFNTKIE…MDITKYQMKG (77 aa)) is alpha C-terminal domain (alpha-CTD).

It belongs to the RNA polymerase alpha chain family. Homodimer. The RNAP catalytic core consists of 2 alpha, 1 beta, 1 beta' and 1 omega subunit. When a sigma factor is associated with the core the holoenzyme is formed, which can initiate transcription.

The enzyme catalyses RNA(n) + a ribonucleoside 5'-triphosphate = RNA(n+1) + diphosphate. DNA-dependent RNA polymerase catalyzes the transcription of DNA into RNA using the four ribonucleoside triphosphates as substrates. The polypeptide is DNA-directed RNA polymerase subunit alpha (Chlorobium limicola (strain DSM 245 / NBRC 103803 / 6330)).